A 157-amino-acid chain; its full sequence is Small ribosomal subunit protein uS7 (157 aa).

This sequence belongs to the universal ribosomal protein uS7 family. In terms of assembly, part of the 30S ribosomal subunit. Contacts proteins S9 and S11.

Its function is as follows. One of the primary rRNA binding proteins, it binds directly to 16S rRNA where it nucleates assembly of the head domain of the 30S subunit. Is located at the subunit interface close to the decoding center, probably blocks exit of the E-site tRNA. The sequence is that of Small ribosomal subunit protein uS7 from Pseudomonas fluorescens (strain Pf0-1).